The sequence spans 216 residues: Pyrrolidone-carboxylate peptidase (216 aa).

Active-site residues include glutamate 80, cysteine 143, and histidine 168.

Belongs to the peptidase C15 family. Homotetramer.

The protein localises to the cytoplasm. The catalysed reaction is Release of an N-terminal pyroglutamyl group from a polypeptide, the second amino acid generally not being Pro.. In terms of biological role, removes 5-oxoproline from various penultimate amino acid residues except L-proline. This is Pyrrolidone-carboxylate peptidase from Cupriavidus necator (strain ATCC 17699 / DSM 428 / KCTC 22496 / NCIMB 10442 / H16 / Stanier 337) (Ralstonia eutropha).